A 203-amino-acid chain; its full sequence is MGEEVSIGATAVGIKTKEGVVLAAEKRVSYGFYTLSTAGKKVFIVNDRLAIASAGIIADMQTLAKILKLNAKAYELEMKRKPSVHAMAKLLSVVMFSRRFMPFFAEVLVGGIDDEGPHLIVMDPLGSLIEDNYAALGTGAKLAIAIIDASYKPDMSLQDAKKLAVQALKAALERDPVSGGGIDLVVIDKNGAREEEVKLQVLI.

The propeptide at methionine 1–alanine 9 is removed in mature form; by autocatalysis. Threonine 10 functions as the Nucleophile in the catalytic mechanism.

The protein belongs to the peptidase T1B family. In terms of assembly, the 20S proteasome core is composed of 14 alpha and 14 beta subunits that assemble into four stacked heptameric rings, resulting in a barrel-shaped structure. The two inner rings, each composed of seven catalytic beta subunits, are sandwiched by two outer rings, each composed of seven alpha subunits. The catalytic chamber with the active sites is on the inside of the barrel. Has a gated structure, the ends of the cylinder being occluded by the N-termini of the alpha-subunits. Is capped at one or both ends by the proteasome regulatory ATPase, PAN.

The protein resides in the cytoplasm. It catalyses the reaction Cleavage of peptide bonds with very broad specificity.. The formation of the proteasomal ATPase PAN-20S proteasome complex, via the docking of the C-termini of PAN into the intersubunit pockets in the alpha-rings, triggers opening of the gate for substrate entry. Interconversion between the open-gate and close-gate conformations leads to a dynamic regulation of the 20S proteasome proteolysis activity. Its function is as follows. Component of the proteasome core, a large protease complex with broad specificity involved in protein degradation. In Pyrobaculum calidifontis (strain DSM 21063 / JCM 11548 / VA1), this protein is Proteasome subunit beta 2.